We begin with the raw amino-acid sequence, 228 residues long: Endonuclease V (228 aa).

Positions 43 and 109 each coordinate Mg(2+).

Belongs to the endonuclease V family. Requires Mg(2+) as cofactor.

The protein localises to the cytoplasm. The catalysed reaction is Endonucleolytic cleavage at apurinic or apyrimidinic sites to products with a 5'-phosphate.. Its function is as follows. DNA repair enzyme involved in the repair of deaminated bases. Selectively cleaves double-stranded DNA at the second phosphodiester bond 3' to a deoxyinosine leaving behind the intact lesion on the nicked DNA. In Dictyoglomus thermophilum (strain ATCC 35947 / DSM 3960 / H-6-12), this protein is Endonuclease V.